A 427-amino-acid polypeptide reads, in one-letter code: Serine hydroxymethyltransferase (427 aa).

Residues Leu-122 and Gly-126–Leu-128 contribute to the (6S)-5,6,7,8-tetrahydrofolate site. Lys-231 bears the N6-(pyridoxal phosphate)lysine mark. (6S)-5,6,7,8-tetrahydrofolate is bound by residues Glu-247 and Ser-355–Phe-357.

Belongs to the SHMT family. Homodimer. Pyridoxal 5'-phosphate is required as a cofactor.

It is found in the cytoplasm. The enzyme catalyses (6R)-5,10-methylene-5,6,7,8-tetrahydrofolate + glycine + H2O = (6S)-5,6,7,8-tetrahydrofolate + L-serine. It functions in the pathway one-carbon metabolism; tetrahydrofolate interconversion. It participates in amino-acid biosynthesis; glycine biosynthesis; glycine from L-serine: step 1/1. In terms of biological role, catalyzes the reversible interconversion of serine and glycine with tetrahydrofolate (THF) serving as the one-carbon carrier. This reaction serves as the major source of one-carbon groups required for the biosynthesis of purines, thymidylate, methionine, and other important biomolecules. Also exhibits THF-independent aldolase activity toward beta-hydroxyamino acids, producing glycine and aldehydes, via a retro-aldol mechanism. The chain is Serine hydroxymethyltransferase from Microcystis aeruginosa (strain NIES-843 / IAM M-2473).